The sequence spans 259 residues: DNA-directed RNA polymerase 30 kDa polypeptide (259 aa).

The TFIIS-type zinc finger occupies 155 to 195 (YNTPCPNCKSRNTTPMMIQTRAADEPPLVRHACRDCKQHFK). 4 residues coordinate Zn(2+): C159, C162, C187, and C190. The disordered stretch occupies residues 214–259 (ENKEITEILPDNNPSPPESPEPASPIDDGLIRSTFDRNDEPPEDDE). Pro residues predominate over residues 226-236 (NPSPPESPEPA).

The protein belongs to the poxviridae DNA-directed RNA polymerase 30 kDa subunit family. The DNA-dependent RNA polymerase (vRNAP) consists of eight subunits encoded by early viral genes and termed according to their apparent molecular masses Rpo147, Rpo132, Rpo35, Rpo30, Rpo22, Rpo19, Rpo18, and Rpo7. The same holoenzyme, with the addition of the transcription-specificity factor RAP94, is used for early gene expression.

Its subcellular location is the virion. The protein resides in the host cytoplasm. The catalysed reaction is RNA(n) + a ribonucleoside 5'-triphosphate = RNA(n+1) + diphosphate. Part of the DNA-dependent RNA polymerase which catalyzes the transcription of viral DNA into RNA using the four ribonucleoside triphosphates as substrates. Responsible for the transcription of early, intermediate and late genes. DNA-dependent RNA polymerase associates with the early transcription factor (ETF), itself composed of OPG118/D6 and OPG134/A8, thereby allowing the early genes transcription. Late transcription, and probably also intermediate transcription, require newly synthesized RNA polymerase. The chain is DNA-directed RNA polymerase 30 kDa polypeptide (OPG066) from Homo sapiens (Human).